The chain runs to 348 residues: Holliday junction branch migration complex subunit RuvB (348 aa).

The interval 4-184 (ADRLIAASGR…FGIVQRLEFY (181 aa)) is large ATPase domain (RuvB-L). Residues Ile23, Arg24, Gly65, Lys68, Thr69, Thr70, 131–133 (EDF), Arg174, Tyr184, and Arg221 each bind ATP. Position 69 (Thr69) interacts with Mg(2+). Residues 185-255 (SDKDLATIVS…VADMALNLLD (71 aa)) form a small ATPAse domain (RuvB-S) region. Residues 258–348 (ERGFDHSDRR…GGDFSEPGDE (91 aa)) are head domain (RuvB-H). Arg294, Arg313, and Arg318 together coordinate DNA.

This sequence belongs to the RuvB family. In terms of assembly, homohexamer. Forms an RuvA(8)-RuvB(12)-Holliday junction (HJ) complex. HJ DNA is sandwiched between 2 RuvA tetramers; dsDNA enters through RuvA and exits via RuvB. An RuvB hexamer assembles on each DNA strand where it exits the tetramer. Each RuvB hexamer is contacted by two RuvA subunits (via domain III) on 2 adjacent RuvB subunits; this complex drives branch migration. In the full resolvosome a probable DNA-RuvA(4)-RuvB(12)-RuvC(2) complex forms which resolves the HJ.

The protein resides in the cytoplasm. The enzyme catalyses ATP + H2O = ADP + phosphate + H(+). The RuvA-RuvB-RuvC complex processes Holliday junction (HJ) DNA during genetic recombination and DNA repair, while the RuvA-RuvB complex plays an important role in the rescue of blocked DNA replication forks via replication fork reversal (RFR). RuvA specifically binds to HJ cruciform DNA, conferring on it an open structure. The RuvB hexamer acts as an ATP-dependent pump, pulling dsDNA into and through the RuvAB complex. RuvB forms 2 homohexamers on either side of HJ DNA bound by 1 or 2 RuvA tetramers; 4 subunits per hexamer contact DNA at a time. Coordinated motions by a converter formed by DNA-disengaged RuvB subunits stimulates ATP hydrolysis and nucleotide exchange. Immobilization of the converter enables RuvB to convert the ATP-contained energy into a lever motion, pulling 2 nucleotides of DNA out of the RuvA tetramer per ATP hydrolyzed, thus driving DNA branch migration. The RuvB motors rotate together with the DNA substrate, which together with the progressing nucleotide cycle form the mechanistic basis for DNA recombination by continuous HJ branch migration. Branch migration allows RuvC to scan DNA until it finds its consensus sequence, where it cleaves and resolves cruciform DNA. This is Holliday junction branch migration complex subunit RuvB from Pseudomonas putida (strain GB-1).